Consider the following 80-residue polypeptide: Sec-independent protein translocase protein TatA (80 aa).

The chain crosses the membrane as a helical span at residues 1-21 (MGQIGIWQILIIALVILVLFG). The segment at 38-80 (SFKKGLNEEDKPAEPAAKIEGPSHEAKPAGEAAKDPRPADKQG) is disordered. Over residues 58-80 (GPSHEAKPAGEAAKDPRPADKQG) the composition is skewed to basic and acidic residues.

The protein belongs to the TatA/E family. In terms of assembly, the Tat system comprises two distinct complexes: a TatABC complex, containing multiple copies of TatA, TatB and TatC subunits, and a separate TatA complex, containing only TatA subunits. Substrates initially bind to the TatABC complex, which probably triggers association of the separate TatA complex to form the active translocon.

It localises to the cell inner membrane. Its function is as follows. Part of the twin-arginine translocation (Tat) system that transports large folded proteins containing a characteristic twin-arginine motif in their signal peptide across membranes. TatA could form the protein-conducting channel of the Tat system. This chain is Sec-independent protein translocase protein TatA, found in Erythrobacter litoralis (strain HTCC2594).